Consider the following 142-residue polypeptide: Ribosomal RNA large subunit methyltransferase H (142 aa).

Residues L55 and G87 each contribute to the S-adenosyl-L-methionine site.

It belongs to the RNA methyltransferase RlmH family. As to quaternary structure, homodimer.

The protein localises to the cytoplasm. The catalysed reaction is pseudouridine(1915) in 23S rRNA + S-adenosyl-L-methionine = N(3)-methylpseudouridine(1915) in 23S rRNA + S-adenosyl-L-homocysteine + H(+). Specifically methylates the pseudouridine at position 1915 (m3Psi1915) in 23S rRNA. In Sphingopyxis alaskensis (strain DSM 13593 / LMG 18877 / RB2256) (Sphingomonas alaskensis), this protein is Ribosomal RNA large subunit methyltransferase H.